We begin with the raw amino-acid sequence, 122 residues long: MIQMQTNLDVADNSGARRVMCIKVLGGSKRRYASVGDIIVVSIKEAIPRGRVKKGDVMKAVVVRTAKDIRRPDGSVIRFDNNAAVLIDNKKEPIGTRIFGPVPRELRAKNHMKIISLAPEVL.

Belongs to the universal ribosomal protein uL14 family. Part of the 50S ribosomal subunit. Forms a cluster with proteins L3 and L19. In the 70S ribosome, L14 and L19 interact and together make contacts with the 16S rRNA in bridges B5 and B8.

In terms of biological role, binds to 23S rRNA. Forms part of two intersubunit bridges in the 70S ribosome. This chain is Large ribosomal subunit protein uL14, found in Brucella anthropi (strain ATCC 49188 / DSM 6882 / CCUG 24695 / JCM 21032 / LMG 3331 / NBRC 15819 / NCTC 12168 / Alc 37) (Ochrobactrum anthropi).